The primary structure comprises 465 residues: Glutamate--tRNA ligase (465 aa).

The short motif at 11-21 (PSPTGFIHLGN) is the 'HIGH' region element. The span at 120-131 (KPRYDGTWRPEP) shows a compositional bias: basic and acidic residues. The tract at residues 120-139 (KPRYDGTWRPEPGKVLPTPP) is disordered. The 'KMSKS' region signature appears at 243–247 (KMSKR). K246 is an ATP binding site.

Belongs to the class-I aminoacyl-tRNA synthetase family. Glutamate--tRNA ligase type 1 subfamily. As to quaternary structure, monomer.

The protein resides in the cytoplasm. It carries out the reaction tRNA(Glu) + L-glutamate + ATP = L-glutamyl-tRNA(Glu) + AMP + diphosphate. Functionally, catalyzes the attachment of glutamate to tRNA(Glu) in a two-step reaction: glutamate is first activated by ATP to form Glu-AMP and then transferred to the acceptor end of tRNA(Glu). This chain is Glutamate--tRNA ligase, found in Ralstonia nicotianae (strain ATCC BAA-1114 / GMI1000) (Ralstonia solanacearum).